Consider the following 751-residue polypeptide: CCR4-NOT transcription complex subunit 3 (751 aa).

The tract at residues 240–534 (ATSPPSHSHM…QFSTTPEIKA (295 aa)) is disordered. Residues 257-268 (SSSTPTSTTSSS) are compositionally biased toward low complexity. Over residues 284-293 (DDKKRGRSTD) the composition is skewed to basic and acidic residues. Position 292 is a phosphothreonine (Thr-292). Polar residues predominate over residues 294-315 (SEVSQSPAKNGSKPVHSNQHPQ). Ser-299 is modified (phosphoserine). Residues 317 to 330 (PAVPPTYPSGPPPT) are compositionally biased toward pro residues. A compositionally biased stretch (polar residues) spans 339–348 (GNNGASTPAA). Residues 441-450 (SSSGGSSASS) show a composition bias toward low complexity. A compositionally biased stretch (polar residues) spans 463–472 (APSTSKESST). Over residues 473 to 498 (AAPSGAGNVASGSGNNSGGPSLLVPL) the composition is skewed to low complexity. Ser-540 carries the post-translational modification Phosphoserine. The repressor domain stretch occupies residues 659–751 (EFYQRLSTET…YRYLEDRDLQ (93 aa)).

The protein belongs to the CNOT2/3/5 family. In terms of assembly, component of the CCR4-NOT complex; distinct complexes seem to exist that differ in the participation of probably mutually exclusive catalytic subunits. In the complex interacts directly with CNOT2. Interacts with TIP120B and NANOS2. Interacts with EBF1. Interacts in an RNA-independent manner with BICC1 (via KH domains).

It is found in the nucleus. Its subcellular location is the cytoplasm. It localises to the P-body. Component of the CCR4-NOT complex which is one of the major cellular mRNA deadenylases and is linked to various cellular processes including bulk mRNA degradation, miRNA-mediated repression, translational repression during translational initiation and general transcription regulation. Additional complex functions may be a consequence of its influence on mRNA expression. May be involved in metabolic regulation; may be involved in recruitment of the CCR4-NOT complex to deadenylation target mRNAs involved in energy metabolism. Involved in mitotic progression and regulation of the spindle assembly checkpoint by regulating the stability of MAD1L1 mRNA. Can repress transcription and may link the CCR4-NOT complex to transcriptional regulation; the repressive function may involve histone deacetylases. Involved in the maintenance of embryonic stem (ES) cell identity; prevents their differentiation towards extraembryonic trophectoderm lineages. This is CCR4-NOT transcription complex subunit 3 (Cnot3) from Mus musculus (Mouse).